The primary structure comprises 603 residues: Nuclear receptor subfamily 2 group C member 1 (603 aa).

Residues 1-178 (MATIEEIAHQ…RLQRCIAFGM (178 aa)) are required for interaction with KAT2B. Residues 110–185 (FDLCVVCGDK…FGMKQDSVQC (76 aa)) constitute a DNA-binding region (nuclear receptor). 2 consecutive NR C4-type zinc fingers follow at residues 113-133 (CVVC…CEGC) and 149-173 (CRGS…LQRC). Phosphoserine occurs at positions 197 and 215. Phosphothreonine is present on Thr-220. Thr-222 carries the post-translational modification Phosphothreonine; by MAPK1. A Glycyl lysine isopeptide (Lys-Gly) (interchain with G-Cter in SUMO2) cross-link involves residue Lys-250. Positions 348–590 (GSVHLITGDS…SVIPHILKME (243 aa)) constitute an NR LBD domain. Position 581 is a phosphoserine; by PKC (Ser-581). Positions 584–603 (PHILKMEPADYNSQIIGHSI) are required for interaction with NRIP1. Lys-588 participates in a covalent cross-link: Glycyl lysine isopeptide (Lys-Gly) (interchain with G-Cter in SUMO2).

The protein belongs to the nuclear hormone receptor family. NR2 subfamily. Homodimer. Heterodimer; binds DNA as a heterodimer with NR2C2 required for chromatin remodeling and for binding to promoter regions such as globin DR1 repeats. Interacts with NRIP1 (via its LXXLL motifs); the interaction provides corepressor activity. Interacts with HDAC3 (via the DNA-binding domain). Interacts with HDAC4 (via the DNA-binding domain). Interacts with PIAS1; the interaction is required for sumoylation of NR2C1. Interacts with UBE2I; the interaction is required for sumoylation of NR2C1. Interacts with KAT2B; the interaction acts as a corepressor of gene expression. Interacts with ESR1; the interaction prevents homodimerization of ESR1 and suppresses its transcriptional activity and cell growth. In terms of processing, sumoylation requires both PIAS1 and UBE2I. Sumoylation appears to dissociate NR2C1 from the PML nuclear bodies. Enhances the interaction with NRIP1 but inhibits interaction with KAT2B. In proliferating cells, stimulation by all-trans retinoic acid, activation of MAPK1-mediated phosphorylation and recruitment to PML bodies with subsequent sumoylation, suppresses OCT4 expression. Phosphorylated on several serine and threonine residues. Phosphorylation on Thr-222, stimulated by all-trans retinoic acid (atRA) mediates PML location and sumoylation in proliferating cells which then modulates its association with effector molecules, KAT2B and NRIP1. Phosphorylation on Ser-581 by PKC is important for protein stability and function as activator of RARB.

It localises to the nucleus. The protein localises to the PML body. In terms of biological role, orphan nuclear receptor. Binds the IR7 element in the promoter of its own gene in an autoregulatory negative feedback mechanism. Primarily repressor of a broad range of genes. Binds to hormone response elements (HREs) consisting of two 5'-AGGTCA-3' half site direct repeat consensus sequences. Together with NR2C2, forms the core of the DRED (direct repeat erythroid-definitive) complex that represses embryonic and fetal globin transcription. Also activator of OCT4 gene expression. May be involved in stem cell proliferation and differentiation. Mediator of retinoic acid-regulated preadipocyte proliferation. The chain is Nuclear receptor subfamily 2 group C member 1 (NR2C1) from Homo sapiens (Human).